The following is a 241-amino-acid chain: Probable GTP-binding protein EngB (241 aa).

One can recognise an EngB-type G domain in the interval 56–240 (GPVEIAFAGR…RAAIALLLKE (185 aa)). Residues 64 to 71 (GRSNVGKS), 91 to 95 (GRTQE), 118 to 121 (DMPG), 185 to 188 (TKID), and 219 to 221 (TSS) each bind GTP. Mg(2+)-binding residues include S71 and T93.

It belongs to the TRAFAC class TrmE-Era-EngA-EngB-Septin-like GTPase superfamily. EngB GTPase family. Requires Mg(2+) as cofactor.

Functionally, necessary for normal cell division and for the maintenance of normal septation. The sequence is that of Probable GTP-binding protein EngB from Brucella suis biovar 1 (strain 1330).